Reading from the N-terminus, the 82-residue chain is Large ribosomal subunit protein bL28 (82 aa).

The disordered stretch occupies residues 1 to 25; it reads MAKVDQITKKRAMTGNTRSHALNHS.

The protein belongs to the bacterial ribosomal protein bL28 family.

The chain is Large ribosomal subunit protein bL28 from Malacoplasma penetrans (strain HF-2) (Mycoplasma penetrans).